The following is a 452-amino-acid chain: Metacaspase-1 (452 aa).

The disordered stretch occupies residues 1 to 97 (MYPGAGRPTY…GPPLQGRPRD (97 aa)). Low complexity predominate over residues 16 to 41 (QKGPYGQPQYQQQYAPPYPERYQQPY). Residues histidine 238 and cysteine 294 contribute to the active site.

Belongs to the peptidase C14B family.

Involved in cell death (apoptosis). The chain is Metacaspase-1 (MCA1) from Eremothecium gossypii (strain ATCC 10895 / CBS 109.51 / FGSC 9923 / NRRL Y-1056) (Yeast).